The chain runs to 293 residues: Small ribosomal subunit biogenesis GTPase RsgA 2 (293 aa).

Positions 63-223 constitute a CP-type G domain; sequence SNELVRPPIA…VADTPGFSVL (161 aa). GTP contacts are provided by residues 112–115 and 166–174; these read TKVD and GQSGVGKSS. Residues Cys-247, Cys-252, His-254, and Cys-260 each contribute to the Zn(2+) site.

Belongs to the TRAFAC class YlqF/YawG GTPase family. RsgA subfamily. In terms of assembly, monomer. Associates with 30S ribosomal subunit, binds 16S rRNA. Zn(2+) serves as cofactor.

It localises to the cytoplasm. One of several proteins that assist in the late maturation steps of the functional core of the 30S ribosomal subunit. Helps release RbfA from mature subunits. May play a role in the assembly of ribosomal proteins into the subunit. Circularly permuted GTPase that catalyzes slow GTP hydrolysis, GTPase activity is stimulated by the 30S ribosomal subunit. The chain is Small ribosomal subunit biogenesis GTPase RsgA 2 from Oceanobacillus iheyensis (strain DSM 14371 / CIP 107618 / JCM 11309 / KCTC 3954 / HTE831).